Consider the following 676-residue polypeptide: MHAGLLGLSALLQAAEQSARLCSIVFYFATGRLLWGWLALSVLLPGFLVQALSFLWFRADGHQGQWWLAVLHLLQLGVWKRHWDSVATALWKGKEAPSWGQLHLQEADLSALRLLEALLQTGPHLLLQAYVFLASDFTDIVPGISALLSWSSLSWALVSYNRFLGIMKPGHHTMLWAALLCQQLWRMGMLGARVLSLVLFCRVYRVWVLVVGGAHWLVMTFWLVAQQSDIVESTCHWRLFNLLVGAVFILCYINFWDSPSRSRVASFYLVMLLENSILLLLATDFLQGVPGTSLWTVVGVLSGFLIGCASLVIYYSLLHPKSSDIQQSFMRKCCGPIEDNKPESEPPPRAVDPTGEMPDSSSWCQEESYELTSLDKAPSPEQNTAEVGLGEQRSGESSFFSHHHWLLLKLALKTGSVSRINAALGGDSPGCSCPPLLGSSQHCDLQRKPLFSHQDLPSSPCDPLTLEKGSEYVGAPKAEMESLETSSYLSFASELEDNATTQKPPATQEDSPKLAGSKADLAAQGKETEGPLQGKEGQESTTLYFSAAMDRTTSHQRGSPVVLRISHSETLVESRPGQPALPQAVTKPFPVTVANISPIPGRNFRPSAELPGRAPDSSECEEWKDAARDPSMQSSLPKMRLKAAEEPCFTSTPKSESIQRDYSCRDRVRQEMSFFI.

7 consecutive transmembrane segments (helical) span residues 37-57, 114-134, 140-160, 206-226, 239-259, 266-286, and 294-314; these read WLAL…FLWF, LLEA…VFLA, IVPG…LVSY, VWVL…LVAQ, LFNL…WDSP, SFYL…TDFL, and LWTV…LVIY. Disordered regions lie at residues 336-362, 372-391, 495-538, and 598-661; these read PIED…DSSS, TSLD…GLGE, LEDN…KEGQ, and PIPG…IQRD. Over residues 498 to 509 the composition is skewed to polar residues; sequence NATTQKPPATQE.

This sequence belongs to the XK family.

It is found in the cell membrane. The sequence is that of XK-related protein 5 from Mus musculus (Mouse).